The following is a 493-amino-acid chain: 3-octaprenyl-4-hydroxybenzoate carboxy-lyase (493 aa).

Asparagine 172 provides a ligand contact to Mn(2+). Prenylated FMN contacts are provided by residues 175–177, 189–191, and 194–195; these read IYR, RWL, and RG. Glutamate 238 is a Mn(2+) binding site. Aspartate 287 acts as the Proton donor in catalysis.

It belongs to the UbiD family. Homohexamer. Prenylated FMN serves as cofactor. Mn(2+) is required as a cofactor.

Its subcellular location is the cell membrane. It carries out the reaction a 4-hydroxy-3-(all-trans-polyprenyl)benzoate + H(+) = a 2-(all-trans-polyprenyl)phenol + CO2. The protein operates within cofactor biosynthesis; ubiquinone biosynthesis. Functionally, catalyzes the decarboxylation of 3-octaprenyl-4-hydroxy benzoate to 2-octaprenylphenol, an intermediate step in ubiquinone biosynthesis. In Shewanella sp. (strain ANA-3), this protein is 3-octaprenyl-4-hydroxybenzoate carboxy-lyase.